The primary structure comprises 221 residues: Vesicle-associated membrane protein 714 (221 aa).

Position 2 is an N-acetylalanine (A2). Residues 2 to 190 (AIVYAVVARG…RRALWMKNAK (189 aa)) are Cytoplasmic-facing. In terms of domain architecture, Longin spans 7 to 112 (VVARGTVVLA…AMNDEFSRVL (106 aa)). Residues 127-187 (TLNRVRGEVS…KRLRRALWMK (61 aa)) enclose the v-SNARE coiled-coil homology domain. The chain crosses the membrane as a helical; Anchor for type IV membrane protein span at residues 191-211 (LLVLLTCLIVFLLYIIIASFC). Residues 212 to 221 (GGITLPSCRS) lie on the Vesicular side of the membrane.

This sequence belongs to the synaptobrevin family. Highly expressed in leaves, stems and roots. Detected in flowers.

It localises to the golgi apparatus membrane. Functionally, involved in the targeting and/or fusion of transport vesicles to their target membrane. This Arabidopsis thaliana (Mouse-ear cress) protein is Vesicle-associated membrane protein 714.